The primary structure comprises 264 residues: Thymidylate synthase (264 aa).

Residue R21 coordinates dUMP. H51 provides a ligand contact to (6R)-5,10-methylene-5,6,7,8-tetrahydrofolate. 126 to 127 (RR) provides a ligand contact to dUMP. Residue C146 is the Nucleophile of the active site. DUMP contacts are provided by residues 166 to 169 (RSAD), N177, and 207 to 209 (HLY). D169 is a (6R)-5,10-methylene-5,6,7,8-tetrahydrofolate binding site. Position 263 (A263) interacts with (6R)-5,10-methylene-5,6,7,8-tetrahydrofolate.

The protein belongs to the thymidylate synthase family. Bacterial-type ThyA subfamily. As to quaternary structure, homodimer.

The protein localises to the cytoplasm. It catalyses the reaction dUMP + (6R)-5,10-methylene-5,6,7,8-tetrahydrofolate = 7,8-dihydrofolate + dTMP. It functions in the pathway pyrimidine metabolism; dTTP biosynthesis. Its function is as follows. Catalyzes the reductive methylation of 2'-deoxyuridine-5'-monophosphate (dUMP) to 2'-deoxythymidine-5'-monophosphate (dTMP) while utilizing 5,10-methylenetetrahydrofolate (mTHF) as the methyl donor and reductant in the reaction, yielding dihydrofolate (DHF) as a by-product. This enzymatic reaction provides an intracellular de novo source of dTMP, an essential precursor for DNA biosynthesis. The protein is Thymidylate synthase of Nitrosomonas eutropha (strain DSM 101675 / C91 / Nm57).